A 1320-amino-acid polypeptide reads, in one-letter code: Bifunctional protein PutA (1320 aa).

The segment at 228 to 574 (LSRSLNRIIG…SFVNRIADTS (347 aa)) is proline dehydrogenase. Residues 653–1119 (QPVAAGEMSP…LANRPESALA (467 aa)) form an aldehyde dehydrogenase region. Residues Glu883 and Cys917 contribute to the active site.

The protein in the N-terminal section; belongs to the proline dehydrogenase family. It in the C-terminal section; belongs to the aldehyde dehydrogenase family. As to quaternary structure, homodimer. FAD serves as cofactor.

The catalysed reaction is L-proline + a quinone = (S)-1-pyrroline-5-carboxylate + a quinol + H(+). It catalyses the reaction L-glutamate 5-semialdehyde + NAD(+) + H2O = L-glutamate + NADH + 2 H(+). The protein operates within amino-acid degradation; L-proline degradation into L-glutamate; L-glutamate from L-proline: step 1/2. It functions in the pathway amino-acid degradation; L-proline degradation into L-glutamate; L-glutamate from L-proline: step 2/2. In terms of biological role, oxidizes proline to glutamate for use as a carbon and nitrogen source and also function as a transcriptional repressor of the put operon. The sequence is that of Bifunctional protein PutA (putA) from Escherichia coli (strain K12).